The chain runs to 164 residues: Peptide methionine sulfoxide reductase MsrA (164 aa).

Cys16 is a catalytic residue.

This sequence belongs to the MsrA Met sulfoxide reductase family.

The enzyme catalyses L-methionyl-[protein] + [thioredoxin]-disulfide + H2O = L-methionyl-(S)-S-oxide-[protein] + [thioredoxin]-dithiol. It catalyses the reaction [thioredoxin]-disulfide + L-methionine + H2O = L-methionine (S)-S-oxide + [thioredoxin]-dithiol. Has an important function as a repair enzyme for proteins that have been inactivated by oxidation. Catalyzes the reversible oxidation-reduction of methionine sulfoxide in proteins to methionine. The protein is Peptide methionine sulfoxide reductase MsrA of Methanoculleus marisnigri (strain ATCC 35101 / DSM 1498 / JR1).